Reading from the N-terminus, the 145-residue chain is Transcription antitermination protein NusB (145 aa).

Belongs to the NusB family.

Involved in transcription antitermination. Required for transcription of ribosomal RNA (rRNA) genes. Binds specifically to the boxA antiterminator sequence of the ribosomal RNA (rrn) operons. The sequence is that of Transcription antitermination protein NusB from Ruminiclostridium cellulolyticum (strain ATCC 35319 / DSM 5812 / JCM 6584 / H10) (Clostridium cellulolyticum).